Reading from the N-terminus, the 88-residue chain is Phosphocarrier protein HPr (88 aa).

The HPr domain maps to 1-88 (MEQNSYVIID…DVLSKEGLTK (88 aa)). The active-site Pros-phosphohistidine intermediate is His15. The residue at position 46 (Ser46) is a Phosphoserine; by HPrK/P.

It localises to the cytoplasm. With respect to regulation, phosphorylation on Ser-46 inhibits the phosphoryl transfer from enzyme I to HPr. General (non sugar-specific) component of the phosphoenolpyruvate-dependent sugar phosphotransferase system (sugar PTS). This major carbohydrate active-transport system catalyzes the phosphorylation of incoming sugar substrates concomitantly with their translocation across the cell membrane. The phosphoryl group from phosphoenolpyruvate (PEP) is transferred to the phosphoryl carrier protein HPr by enzyme I. Phospho-HPr then transfers it to the PTS EIIA domain. In terms of biological role, P-Ser-HPr interacts with the catabolite control protein A (CcpA), forming a complex that binds to DNA at the catabolite response elements cre, operator sites preceding a large number of catabolite-regulated genes. Thus, P-Ser-HPr is a corepressor in carbon catabolite repression (CCR), a mechanism that allows bacteria to coordinate and optimize the utilization of available carbon sources. P-Ser-HPr also plays a role in inducer exclusion, in which it probably interacts with several non-PTS permeases and inhibits their transport activity. The chain is Phosphocarrier protein HPr (ptsH) from Staphylococcus aureus (strain MSSA476).